The chain runs to 232 residues: Octanoyltransferase (232 aa).

Positions 43–231 (DQTPNYFLFV…HFTQLFDCTV (189 aa)) constitute a BPL/LPL catalytic domain. Substrate contacts are provided by residues 88–95 (RGGDITYH), 160–162 (ALG), and 173–175 (GFA). Catalysis depends on Cys-191, which acts as the Acyl-thioester intermediate.

It belongs to the LipB family.

It is found in the cytoplasm. The catalysed reaction is octanoyl-[ACP] + L-lysyl-[protein] = N(6)-octanoyl-L-lysyl-[protein] + holo-[ACP] + H(+). It participates in protein modification; protein lipoylation via endogenous pathway; protein N(6)-(lipoyl)lysine from octanoyl-[acyl-carrier-protein]: step 1/2. Catalyzes the transfer of endogenously produced octanoic acid from octanoyl-acyl-carrier-protein onto the lipoyl domains of lipoate-dependent enzymes. Lipoyl-ACP can also act as a substrate although octanoyl-ACP is likely to be the physiological substrate. The chain is Octanoyltransferase from Flavobacterium psychrophilum (strain ATCC 49511 / DSM 21280 / CIP 103535 / JIP02/86).